We begin with the raw amino-acid sequence, 376 residues long: MSKRDYYEVLGVGRDASEREIKKAYKRLAMKFHPDRNPGDKAAEASFKEAKEAYEILTDTDKKAAYDQFGHAGVDPNRGGGYGGGQGDFGDIFGDVFGDIFGGGRRGGQRQAARGSDLRYNLELSLEEAVKGLTKELRIPTLATCDLCDGSGAKKGTSASTCTTCHGQGQVQMRQGFFTVQQPCPTCHGRGKIIKDPCSKCHGDGRVEKSKTLSVKIPAGVDTGDRIRLAGEGEAGEFGAPPGDLYVQVSVREHAIFVRDGNNLYCEVPISFSKAALGGEIEVPTLDGKVSLKIPAETQTGRMFRLRGKGVKSVRSHAVGDLLCKVVMETPVNLNDRQKELLREFEATLTGESKKHSPKAEGFFDGVKKFFQDLNS.

In terms of domain architecture, J spans 5-70; sequence DYYEVLGVGR…DKKAAYDQFG (66 aa). Residues 132 to 210 form a CR-type zinc finger; it reads GLTKELRIPT…CHGDGRVEKS (79 aa). Zn(2+) is bound by residues Cys-145, Cys-148, Cys-162, Cys-165, Cys-184, Cys-187, Cys-198, and Cys-201. CXXCXGXG motif repeat units lie at residues 145-152, 162-169, 184-191, and 198-205; these read CDLCDGSG, CTTCHGQG, CPTCHGRG, and CSKCHGDG.

This sequence belongs to the DnaJ family. In terms of assembly, homodimer. Requires Zn(2+) as cofactor.

It localises to the cytoplasm. Functionally, participates actively in the response to hyperosmotic and heat shock by preventing the aggregation of stress-denatured proteins and by disaggregating proteins, also in an autonomous, DnaK-independent fashion. Unfolded proteins bind initially to DnaJ; upon interaction with the DnaJ-bound protein, DnaK hydrolyzes its bound ATP, resulting in the formation of a stable complex. GrpE releases ADP from DnaK; ATP binding to DnaK triggers the release of the substrate protein, thus completing the reaction cycle. Several rounds of ATP-dependent interactions between DnaJ, DnaK and GrpE are required for fully efficient folding. Also involved, together with DnaK and GrpE, in the DNA replication of plasmids through activation of initiation proteins. In Shewanella sp. (strain W3-18-1), this protein is Chaperone protein DnaJ.